Here is a 179-residue protein sequence, read N- to C-terminus: Protein PLASTID REDOX INSENSITIVE 2, chloroplastic (179 aa).

The N-terminal 69 residues, 1-69 (MASMHEALFS…SLSRRGFVCR (69 aa)), are a transit peptide targeting the chloroplast.

Binds DNA when in complex with CSP41b.

The protein localises to the plastid. The protein resides in the chloroplast stroma. It is found in the chloroplast nucleoid. In terms of biological role, involved in redox-mediated retrograde signaling to synchronize the expression of photosynthetic genes from both the nuclear and plastidic genomes, especially in excess light conditions. Required for full expression of genes transcribed by the plastid-encoded RNA polymerase (PEP). Essential for embryo development. This chain is Protein PLASTID REDOX INSENSITIVE 2, chloroplastic, found in Arabidopsis thaliana (Mouse-ear cress).